A 326-amino-acid polypeptide reads, in one-letter code: Polycomb complex protein BMI-1 (326 aa).

Residues 18 to 57 (CVLCGGYFIDATTIIECLHSFCKTCIVRYLETSKYCPICD) form an RING-type zinc finger. The Nuclear localization signal signature appears at 81-95 (KLVPGLFKNEMKRRR). The tract at residues 162–182 (RYLRCPAAMTVMHLRKFLRSK) is interaction with PHC2. The interaction with E4F1 stretch occupies residues 164–228 (LRCPAAMTVM…GPLPLKYRVR (65 aa)). The segment at 236 to 326 (IGHQREGLSN…INGSSATSSG (91 aa)) is disordered. A compositionally biased stretch (low complexity) spans 265–278 (LPSTSSCLPSPSTP). A compositionally biased stretch (polar residues) spans 279 to 310 (VQSPHPQFPHISSTMNGTSSSPGSNHQSSFTN). Positions 315–326 (SSINGSSATSSG) are enriched in low complexity.

As to quaternary structure, component of a PRC1-like complex.

It is found in the nucleus. Its subcellular location is the cytoplasm. Functionally, component of a Polycomb group (PcG) multiprotein PRC1-like complex, a complex class required to maintain the transcriptionally repressive state of many genes, including Hox genes, throughout development. PcG PRC1 complex acts via chromatin remodeling and modification of histones; it mediates monoubiquitination of histone H2A 'Lys-119', rendering chromatin heritably changed in its expressibility. In the PRC1-like complex, regulates the E3 ubiquitin-protein ligase activity of RNF2/RING2. This chain is Polycomb complex protein BMI-1 (BMI1), found in Gallus gallus (Chicken).